Here is a 123-residue protein sequence, read N- to C-terminus: WAP four-disulfide core domain protein 5 (123 aa).

Residues 1–24 (MRIQSLLLLGALLAVGSQLPAVFG) form the signal peptide. WAP domains are found at residues 27–73 (KGEK…CVPR) and 74–121 (VSVK…RDPA). 8 disulfide bridges follow: cysteine 34-cysteine 62, cysteine 41-cysteine 66, cysteine 49-cysteine 61, cysteine 55-cysteine 70, cysteine 81-cysteine 109, cysteine 88-cysteine 113, cysteine 96-cysteine 108, and cysteine 102-cysteine 117.

It is found in the secreted. Its function is as follows. Putative acid-stable proteinase inhibitor. The protein is WAP four-disulfide core domain protein 5 (WFDC5) of Papio anubis (Olive baboon).